We begin with the raw amino-acid sequence, 131 residues long: Protein SOB FIVE-LIKE 4 (131 aa).

2 disordered regions span residues 1-21 (MDKE…SSPI) and 40-131 (IYNY…YRMK). Residues 8–18 (SSESGWTTYLS) show a composition bias toward polar residues. The SOFL-A signature appears at 11 to 16 (SGWTTY). Basic and acidic residues predominate over residues 46 to 58 (KVEHEEERNKDSD). An SOFL-B motif is present at residues 60 to 69 (SMASDASSGP). A compositionally biased stretch (basic and acidic residues) spans 79-109 (KALDLKNGKNEGNSKSKNDDDHHNHYHDGKK). A Nuclear localization signal motif is present at residues 107–114 (GKKTSNSY). The segment covering 114-131 (YRKKDKKKRENKSTYRMK) has biased composition (basic residues).

This sequence belongs to the SOFL plant protein family. As to expression, expressed, at low levels, in seedlings, roots, flowers and siliques.

It localises to the cytoplasm. Its subcellular location is the nucleus. In terms of biological role, involved in cytokinin-mediated development. This is Protein SOB FIVE-LIKE 4 from Arabidopsis thaliana (Mouse-ear cress).